Here is a 479-residue protein sequence, read N- to C-terminus: Ribulose bisphosphate carboxylase large chain 2 (479 aa).

Positions 116 and 166 each coordinate substrate. K168 serves as the catalytic Proton acceptor. K170 lines the substrate pocket. 3 residues coordinate Mg(2+): K194, D196, and E197. K194 is modified (N6-carboxylysine). H287 acts as the Proton acceptor in catalysis. Substrate contacts are provided by R288, H320, and S372.

The protein belongs to the RuBisCO large chain family. Type I subfamily. As to quaternary structure, heterohexadecamer of 8 large chains and 8 small chains. Requires Mg(2+) as cofactor.

It carries out the reaction 2 (2R)-3-phosphoglycerate + 2 H(+) = D-ribulose 1,5-bisphosphate + CO2 + H2O. It catalyses the reaction D-ribulose 1,5-bisphosphate + O2 = 2-phosphoglycolate + (2R)-3-phosphoglycerate + 2 H(+). Functionally, ruBisCO catalyzes two reactions: the carboxylation of D-ribulose 1,5-bisphosphate, the primary event in carbon dioxide fixation, as well as the oxidative fragmentation of the pentose substrate. Both reactions occur simultaneously and in competition at the same active site. The sequence is that of Ribulose bisphosphate carboxylase large chain 2 from Bradyrhizobium sp. (strain BTAi1 / ATCC BAA-1182).